Reading from the N-terminus, the 272-residue chain is Glutamate racemase (272 aa).

Residues 9–10 (DS) and 41–42 (YG) contribute to the substrate site. Cys73 acts as the Proton donor/acceptor in catalysis. 74–75 (NT) serves as a coordination point for substrate. Cys183 (proton donor/acceptor) is an active-site residue. 184-185 (TH) is a substrate binding site.

The protein belongs to the aspartate/glutamate racemases family.

It carries out the reaction L-glutamate = D-glutamate. It functions in the pathway cell wall biogenesis; peptidoglycan biosynthesis. In terms of biological role, provides the (R)-glutamate required for cell wall biosynthesis. This is Glutamate racemase from Shewanella sp. (strain MR-4).